A 267-amino-acid chain; its full sequence is MAAGVIRPLCDFQLPLLRHHPFLPSDPEPPETSEEEEEEEEEEEEEEGEGEGLGGCGRILPSSGRAEATEEAAPEGPGSPETPLQLLRFSELISDDIRRYFGRKDKGQDPDACDVYADSRPPRSTARELYYADLVRLARGGSLEDEDTPEPRVPQGQVCRPGLSGDRAQPLGPLAELFDYGLQQYWGSRAAAGWSLTLERKYGHITPMAQRKLPPSFWKEPTPSPLGLLHPGTPDFSDLLASWSTEACPELPGRGTPALEGARPAEA.

Disordered regions lie at residues 19 to 88, 142 to 163, and 247 to 267; these read HHPF…QLLR, SLEDEDTPEPRVPQGQVCRPGL, and ACPELPGRGTPALEGARPAEA. The span at 28-50 shows a compositional bias: acidic residues; that stretch reads EPPETSEEEEEEEEEEEEEEGEG. Low complexity predominate over residues 74–83; that stretch reads PEGPGSPETP.

In terms of biological role, plays a critical role in intestinal function. Acts by promoting the development of enteroendocrine cells (EECs) of the gastrointestinal tract and pancreas. It is thereby required for normal enteroendocrine peptide hormone secretion. This Homo sapiens (Human) protein is Protein PERCC1.